The chain runs to 149 residues: UPF0178 protein Cphy_3042 (149 aa).

Residues 112–128 (QRRHGKQNLHSKNNKKR) are compositionally biased toward basic residues. Residues 112-132 (QRRHGKQNLHSKNNKKRTTGD) form a disordered region.

It belongs to the UPF0178 family.

The chain is UPF0178 protein Cphy_3042 from Lachnoclostridium phytofermentans (strain ATCC 700394 / DSM 18823 / ISDg) (Clostridium phytofermentans).